The chain runs to 1151 residues: ATP-dependent helicase/deoxyribonuclease subunit B (1151 aa).

The 273-residue stretch at 1–273 (MALRLVLGRA…LALAAGVRVE (273 aa)) folds into the UvrD-like helicase ATP-binding domain. 8 to 15 (GRAGSGKT) lines the ATP pocket. Positions 282–578 (PPRFREAPAL…KLRLIPPALD (297 aa)) constitute a UvrD-like helicase C-terminal domain. Residues cysteine 788, cysteine 1107, cysteine 1110, and cysteine 1116 each coordinate [4Fe-4S] cluster.

The protein belongs to the helicase family. AddB/RexB type 1 subfamily. As to quaternary structure, heterodimer of AddA and AddB. The cofactor is Mg(2+). It depends on [4Fe-4S] cluster as a cofactor.

The heterodimer acts as both an ATP-dependent DNA helicase and an ATP-dependent, dual-direction single-stranded exonuclease. Recognizes the chi site generating a DNA molecule suitable for the initiation of homologous recombination. The AddB subunit has 5' -&gt; 3' nuclease activity but not helicase activity. The polypeptide is ATP-dependent helicase/deoxyribonuclease subunit B (Moorella thermoacetica (strain ATCC 39073 / JCM 9320)).